A 122-amino-acid chain; its full sequence is Small ribosomal subunit protein uS13 (122 aa).

Residues 93-122 are disordered; sequence RLSLPVRGQRTKTNSRTRKGKRKTVAGKKK. A compositionally biased stretch (basic residues) spans 101 to 122; that stretch reads QRTKTNSRTRKGKRKTVAGKKK.

The protein belongs to the universal ribosomal protein uS13 family. As to quaternary structure, part of the 30S ribosomal subunit. Forms a loose heterodimer with protein S19. Forms two bridges to the 50S subunit in the 70S ribosome.

Located at the top of the head of the 30S subunit, it contacts several helices of the 16S rRNA. In the 70S ribosome it contacts the 23S rRNA (bridge B1a) and protein L5 of the 50S subunit (bridge B1b), connecting the 2 subunits; these bridges are implicated in subunit movement. Contacts the tRNAs in the A and P-sites. This Chlamydia pneumoniae (Chlamydophila pneumoniae) protein is Small ribosomal subunit protein uS13.